Consider the following 475-residue polypeptide: Ribulose bisphosphate carboxylase large chain (475 aa).

Positions 1–2 (MS) are excised as a propeptide. Residue Pro-3 is modified to N-acetylproline. Lys-14 carries the N6,N6,N6-trimethyllysine modification. Substrate contacts are provided by Asn-123 and Thr-173. Lys-175 (proton acceptor) is an active-site residue. Lys-177 is a substrate binding site. Lys-201, Asp-203, and Glu-204 together coordinate Mg(2+). Lys-201 is subject to N6-carboxylysine. The active-site Proton acceptor is the His-294. Residues Arg-295, His-327, and Ser-379 each contribute to the substrate site.

This sequence belongs to the RuBisCO large chain family. Type I subfamily. Heterohexadecamer of 8 large chains and 8 small chains; disulfide-linked. The disulfide link is formed within the large subunit homodimers. The cofactor is Mg(2+). In terms of processing, the disulfide bond which can form in the large chain dimeric partners within the hexadecamer appears to be associated with oxidative stress and protein turnover.

Its subcellular location is the plastid. It localises to the chloroplast. The enzyme catalyses 2 (2R)-3-phosphoglycerate + 2 H(+) = D-ribulose 1,5-bisphosphate + CO2 + H2O. It carries out the reaction D-ribulose 1,5-bisphosphate + O2 = 2-phosphoglycolate + (2R)-3-phosphoglycerate + 2 H(+). In terms of biological role, ruBisCO catalyzes two reactions: the carboxylation of D-ribulose 1,5-bisphosphate, the primary event in carbon dioxide fixation, as well as the oxidative fragmentation of the pentose substrate in the photorespiration process. Both reactions occur simultaneously and in competition at the same active site. In Nandina domestica (Heavenly bamboo), this protein is Ribulose bisphosphate carboxylase large chain.